We begin with the raw amino-acid sequence, 421 residues long: AA11 family lytic polysaccharide monooxygenase (421 aa).

The N-terminal stretch at methionine 1–glycine 19 is a signal peptide. 3 residues coordinate Cu(+): histidine 20, histidine 79, and glutamate 93. 3 disulfide bridges follow: cysteine 48-cysteine 162, cysteine 84-cysteine 110, and cysteine 201-cysteine 235. A glycan (N-linked (GlcNAc...) asparagine) is linked at asparagine 117. Residues glycine 231–leucine 349 are disordered. The span at threonine 247–threonine 285 shows a compositional bias: low complexity. Polar residues predominate over residues serine 304 to proline 314. A compositionally biased stretch (low complexity) spans serine 315 to leucine 349.

The protein belongs to the polysaccharide monooxygenase AA11 family. It depends on Cu(2+) as a cofactor.

Functionally, lytic polysaccharide monooxygenase (LPMO) that depolymerizes chitin via the oxidation of scissile beta-(1-4)-glycosidic bonds, yielding C1 or C4 oxidation products. Catalysis by LPMOs requires the reduction of the active-site copper from Cu(II) to Cu(I) by a reducing agent and H(2)O(2) or O(2) as a cosubstrate. Active on chitin but has no activity on other substrates, including diverse mannans, cellulose and starch (data not shown). Primary chain cleavage yields predominantly aldonic acid oligosaccharides with even-numbered degrees of polymerization. This chain is AA11 family lytic polysaccharide monooxygenase, found in Aspergillus oryzae (strain ATCC 42149 / RIB 40) (Yellow koji mold).